A 489-amino-acid polypeptide reads, in one-letter code: Glutamyl-tRNA(Gln) amidotransferase subunit A (489 aa).

Residues Lys77 and Ser152 each act as charge relay system in the active site. Catalysis depends on Ser176, which acts as the Acyl-ester intermediate.

This sequence belongs to the amidase family. GatA subfamily. Heterotrimer of A, B and C subunits.

The catalysed reaction is L-glutamyl-tRNA(Gln) + L-glutamine + ATP + H2O = L-glutaminyl-tRNA(Gln) + L-glutamate + ADP + phosphate + H(+). Functionally, allows the formation of correctly charged Gln-tRNA(Gln) through the transamidation of misacylated Glu-tRNA(Gln) in organisms which lack glutaminyl-tRNA synthetase. The reaction takes place in the presence of glutamine and ATP through an activated gamma-phospho-Glu-tRNA(Gln). This chain is Glutamyl-tRNA(Gln) amidotransferase subunit A, found in Protochlamydia amoebophila (strain UWE25).